The chain runs to 130 residues: Con-Ins G2b (130 aa).

A signal peptide spans 1 to 23 (MTTSSYFLLVALGLLLYVRQSFS). 4 cysteine pairs are disulfide-bonded: Cys29/Cys100, Cys41/Cys103, Cys53/Cys116, and Cys102/Cys107. A 4-hydroxyproline; partial modification is found at Pro34. Residues 54 to 77 (EEEEARRGGTNDGGKKRRRASPLR) form a disordered region. Positions 59 to 92 (RRGGTNDGGKKRRRASPLRKRRRFISMLKARAKR) are cleaved as a propeptide — c peptide. A compositionally biased stretch (basic residues) spans 68–77 (KKRRRASPLR). The residue at position 111 (Glu111) is a 4-carboxyglutamate; partial.

The protein belongs to the insulin family. As to quaternary structure, heterodimer of A and B chains; disulfide-linked. As to expression, expressed by the venom gland.

Its subcellular location is the secreted. Its function is as follows. This venom insulin, from a fish-hunting cone snail, facilitates prey capture by rapidly inducing hypoglycemic shock. Intraperitoneal injection of this peptide into zebrafish lowers blood glucose with the same potency than human insulin. In vivo, when applied to water, this peptide reduces overall locomotor activity of zebrafish larvae, observed as a significant decrease in the percentage of time spent swimming and movement frequency. In Conus geographus (Geography cone), this protein is Con-Ins G2b.